The chain runs to 101 residues: Putative septation protein SpoVG (101 aa).

This sequence belongs to the SpoVG family.

In terms of biological role, could be involved in septation. The chain is Putative septation protein SpoVG from Anaeromyxobacter dehalogenans (strain 2CP-C).